The sequence spans 543 residues: Oxalate--CoA ligase (543 aa).

196-207 contacts ATP; the sequence is HTSGTTSTPKTV. Positions 410–458 match the FACS motif; sequence ENYFRTGDQGYFDPEGFLVLTGRIKELINRGGEKISPIELDGIMLSHPK. A C-terminal peroxisome targeting signal (PTS1) motif is present at residues 541–543; sequence SKL.

It belongs to the ATP-dependent AMP-binding enzyme family. As to quaternary structure, interacts with PEX5.

It localises to the peroxisome matrix. The protein resides in the peroxisome membrane. The catalysed reaction is oxalate + ATP + CoA = oxalyl-CoA + AMP + diphosphate. Functionally, catalyzes the first step in a degradation pathway of oxalate to CO(2) to protect the cell against the harmful effects of oxalate derived from endogenous processes or an environmental sources. The protein is Oxalate--CoA ligase of Saccharomyces cerevisiae (strain ATCC 204508 / S288c) (Baker's yeast).